A 266-amino-acid chain; its full sequence is MADAEKNAVAEKNAVAEENAVAEENAVADKNATKEVLAEAASVLEPVGLPEEAELPAKIMEEFMRNSRKKDKLLCSQLQVVNFLQTFLAQEDNTDQNPDALASEDTSRQKATETKEQWKELKATYMDHVDVIKCALSEALPQVKEAHRKYTELQKAFEQLEAKKRVLEEKLQLAQKQWVLQQKRLQNLTKISAEVKRRRKRALEKLDGSHQELETLKQQAGQEQEKLQRNQSYLQLLCSLQNKLVISESKADDKDVKGPALPPKSP.

Residues 95 to 115 (DQNPDALASEDTSRQKATETK) form a disordered region. Residues 105–115 (DTSRQKATETK) show a composition bias toward basic and acidic residues. Residues 136 to 237 (LSEALPQVKE…QRNQSYLQLL (102 aa)) adopt a coiled-coil conformation. S232 and S265 each carry phosphoserine.

As to quaternary structure, component of the KNL1 complex composed of KNL1 and ZWINT. Part of the ten-subunit outer kinetochore KMN network that includes the KNL1, MIS12 and NDC80 complexes; a bioriented kinetochore contains approximately 150 copies of the network. Interacts with the MIS12 complex subunits MIS12 DSN1, and PMF1. Interacts with the NDC80 complex subunit NDC80 during mitosis. Interacts with ZW10. Interacts with CETN3. Expressed abundantly in brain and at lower levels in testis and kidney.

Its subcellular location is the nucleus. The protein localises to the chromosome. It localises to the centromere. The protein resides in the kinetochore. Functionally, acts as a component of the outer kinetochore KNL1 complex that serves as a docking point for spindle assembly checkpoint components and mediates microtubule-kinetochore interactions. Kinetochores, consisting of a centromere-associated inner segment and a microtubule-contacting outer segment, play a crucial role in chromosome segregation by mediating the physical connection between centromeric DNA and spindle microtubules. The outer kinetochore is made up of the ten-subunit KMN network, comprising the MIS12, NDC80 and KNL1 complexes, and auxiliary microtubule-associated components; together they connect the outer kinetochore with the inner kinetochore, bind microtubules, and mediate interactions with mitotic checkpoint proteins that delay anaphase until chromosomes are bioriented on the spindle. Targets the RZZ complex to the kinetochore at prometaphase. Recruits MAD2L1 to the kinetochore, but is not required for BUB1B localization. In addition to orienting mitotic chromosomes, it is also essential for alignment of homologous chromosomes during meiotic metaphase I. In meiosis I, required to activate the spindle assembly checkpoint at unattached kinetochores to correct erroneous kinetochore-microtubule attachments. This chain is Outer kinetochore KNL1 complex subunit ZWINT (Zwint), found in Rattus norvegicus (Rat).